The primary structure comprises 408 residues: S-adenosylmethionine synthase (408 aa).

140-145 (GQGSVD) serves as a coordination point for ATP.

Belongs to the AdoMet synthase 2 family. Mg(2+) is required as a cofactor.

It carries out the reaction L-methionine + ATP + H2O = S-adenosyl-L-methionine + phosphate + diphosphate. It participates in amino-acid biosynthesis; S-adenosyl-L-methionine biosynthesis; S-adenosyl-L-methionine from L-methionine: step 1/1. Catalyzes the formation of S-adenosylmethionine from methionine and ATP. This chain is S-adenosylmethionine synthase, found in Caldivirga maquilingensis (strain ATCC 700844 / DSM 13496 / JCM 10307 / IC-167).